A 334-amino-acid chain; its full sequence is HTH-type transcriptional repressor PurR (334 aa).

The region spanning 2–56 (ATIKDVARLAGVSTTTVSHVINKTRFVAEATQEKVNKAVDELNYAPSAVARSLKC) is the HTH lacI-type domain. The H-T-H motif DNA-binding region spans 4-23 (IKDVARLAGVSTTTVSHVIN). A DNA-binding region spans residues 48–56 (SAVARSLKC). Hypoxanthine contacts are provided by F73, K189, F220, and D274.

In terms of assembly, homodimer.

It participates in purine metabolism; purine nucleotide biosynthesis [regulation]. Is the main repressor of the genes involved in the de novo synthesis of purine nucleotides, regulating purB, purC, purEK, purF, purHD, purL, purMN and guaBA expression. PurR is allosterically activated to bind its cognate DNA by binding the purine corepressors, hypoxanthine or guanine, thereby effecting transcription repression. This is HTH-type transcriptional repressor PurR from Vibrio atlanticus (strain LGP32) (Vibrio splendidus (strain Mel32)).